A 434-amino-acid polypeptide reads, in one-letter code: Salicylate hydroxylase (434 aa).

Residue 9 to 38 (RIGIVGGGISGVALALELCRYSHIQVQLFE) coordinates FAD.

In terms of assembly, monomer. FAD serves as cofactor.

The enzyme catalyses salicylate + NADH + O2 + 2 H(+) = catechol + CO2 + NAD(+) + H2O. It functions in the pathway aromatic compound metabolism; naphthalene degradation. This is Salicylate hydroxylase (nahG) from Pseudomonas putida (Arthrobacter siderocapsulatus).